Here is a 398-residue protein sequence, read N- to C-terminus: Secreted aspartic protease 2 (398 aa).

Residues 1–18 (MFLKNIFIALAIALLVDA) form the signal peptide. Positions 19-56 (TPTTTKRSAGFVALDFSVVKTPKAFPVTNGQEGKTSKR) are cleaved as a propeptide — activation peptide. Positions 70 to 384 (YAADITVGSN…DLDDNEISLA (315 aa)) constitute a Peptidase A1 domain. The active site involves Asp88. 88–90 (DTG) serves as a coordination point for pepstatin A. Cys103 and Cys115 form a disulfide bridge. 141–142 (GD) provides a ligand contact to pepstatin A. The Zn(2+) site is built by Asp247 and Asp270. Asp274 is an active-site residue. Residue 274–278 (DSGTT) coordinates pepstatin A. A disulfide bridge connects residues Cys312 and Cys350. Asn313 and Asn321 each carry an N-linked (GlcNAc...) asparagine glycan.

Belongs to the peptidase A1 family. As to quaternary structure, monomer.

It localises to the secreted. It carries out the reaction Preferential cleavage at the carboxyl of hydrophobic amino acids, but fails to cleave 15-Leu-|-Tyr-16, 16-Tyr-|-Leu-17 and 24-Phe-|-Phe-25 of insulin B chain. Activates trypsinogen, and degrades keratin.. Its function is as follows. Secreted aspartic peptidases (SAPs) are a group of ten acidic hydrolases considered as key virulence factors. These enzymes supply the fungus with nutrient amino acids as well as are able to degrade the selected host's proteins involved in the immune defense. Induces host inflammatory cytokine production in a proteolytic activity-independent way. Plays a role in tissue damage during superficial infection. Moreover, acts toward human hemoglobin though limited proteolysis to generate a variety of antimicrobial hemocidins, enabling to compete with the other microorganisms of the same physiological niche using the microbicidal peptides generated from the host protein. Functionally, plays a key role in defense against host by cleaving histatin-5 (Hst 5), a peptide from human saliva that carries out fungicidal activity. The cleavage rate decreases in an order of SAP2 &gt; SAP9 &gt; SAP3 &gt; SAP7 &gt; SAP4 &gt; SAP1 &gt; SAP8. The first cleavage occurs between residues 'Lys-17' and 'His-18' of Hst 5, giving DSHAKRHHGYKRKFHEK and HHSHRGY peptides. Simultaneously, the DSHAKRHHGYKRK peptide is also formed. Further fragmentation by SAP2 results in FHEK and DSHAKRHHGY products. The polypeptide is Secreted aspartic protease 2 (Candida albicans (strain SC5314 / ATCC MYA-2876) (Yeast)).